We begin with the raw amino-acid sequence, 320 residues long: Heptaprenyl diphosphate synthase component 2 (320 aa).

3 residues coordinate isopentenyl diphosphate: Lys-45, Arg-48, and His-77. Mg(2+) is bound by residues Asp-84 and Asp-88. Position 93 (Arg-93) interacts with all-trans-hexaprenyl diphosphate. Isopentenyl diphosphate is bound at residue Arg-94. The all-trans-hexaprenyl diphosphate site is built by Lys-170, Thr-171, and Gln-208.

This sequence belongs to the FPP/GGPP synthase family. Heterodimer of component I and II. Requires Mg(2+) as cofactor.

The catalysed reaction is 4 isopentenyl diphosphate + (2E,6E)-farnesyl diphosphate = all-trans-heptaprenyl diphosphate + 4 diphosphate. Supplies heptaprenyl diphosphate, the precursor for the side chain of the isoprenoid quinone menaquinone-7 (MQ-7). The polypeptide is Heptaprenyl diphosphate synthase component 2 (hepT) (Geobacillus stearothermophilus (Bacillus stearothermophilus)).